Reading from the N-terminus, the 222-residue chain is MSRNIRNVLNMSDLPPQPNFSYELDLQNQGFFHIAGVDEVGRGPLAGPVVTAAVILSKDHSLDGLNDSKKLSVQKRNRLYCEILQSALAISIASICARAIDQSDIRKATLEAMRRCVMGLAVPAHYALIDGRDIPPHLPCPAKALVKGDQRSVSIAAASIVAKVTRDRMMEHAGQVYQGYGLEKHVGYATVAHRAAIAEYGPVIGLHRYSFALIKRYKEDIS.

Residues 32-222 (FHIAGVDEVG…LIKRYKEDIS (191 aa)) form the RNase H type-2 domain. Aspartate 38, glutamate 39, and aspartate 130 together coordinate a divalent metal cation.

The protein belongs to the RNase HII family. It depends on Mn(2+) as a cofactor. Mg(2+) serves as cofactor.

It is found in the cytoplasm. It catalyses the reaction Endonucleolytic cleavage to 5'-phosphomonoester.. Endonuclease that specifically degrades the RNA of RNA-DNA hybrids. The sequence is that of Ribonuclease HII from Bartonella bacilliformis (strain ATCC 35685 / KC583 / Herrer 020/F12,63).